Consider the following 108-residue polypeptide: UPF0235 protein RPB_0109 (108 aa).

This sequence belongs to the UPF0235 family.

In Rhodopseudomonas palustris (strain HaA2), this protein is UPF0235 protein RPB_0109.